Here is a 786-residue protein sequence, read N- to C-terminus: DENN domain-containing protein 1C (786 aa).

The region spanning 13–158 is the uDENN domain; that stretch reads FDWFFEAGCP…MDSSITVRSE (146 aa). Residues 182-318 enclose the cDENN domain; the sequence is SLPSIPENRN…VVSLLRLRLR (137 aa). Positions 320–398 constitute a dDENN domain; sequence VALSPGEGVS…ESRLEKLNAG (79 aa). An FXDXF motif motif is present at residues 401-405; it reads FSDQF. Positions 481-553 are disordered; it reads KDGDSGLQRG…LSPGDTQNPW (73 aa). Over residues 527-541 the composition is skewed to basic and acidic residues; sequence LKTEEGPSEPLRERS. Residues 542–552 are compositionally biased toward polar residues; sequence PTLSPGDTQNP. At Ser565 the chain carries Phosphoserine. Positions 570 to 579 match the Clathrin box motif; it reads DLLSEILDSL. Disordered regions lie at residues 653–741 and 762–786; these read YSKN…QPPQ and SHVSTQQRPQDKQPRVADLKKCFEN. Over residues 657-675 the composition is skewed to low complexity; the sequence is SCSQPFQQSPPSQGDPGPS. Positions 706–740 are enriched in polar residues; it reads LLVSTEPNSDAVQRLQSISSPSCSHSAENPRNQPP. Basic and acidic residues predominate over residues 770–786; sequence PQDKQPRVADLKKCFEN.

As to quaternary structure, exhibits low nucleotide-independent RAB35-binding activity. Interacts with clathrin heavy chain/CLTC and with AP2A2, but not with AP2B1.

It localises to the cytoplasm. The protein localises to the cytosol. Its subcellular location is the cytoplasmic vesicle. It is found in the clathrin-coated vesicle. Guanine nucleotide exchange factor (GEF) which may activate RAB8A, RAB13 and RAB35. Promotes the exchange of GDP to GTP, converting inactive GDP-bound Rab proteins into their active GTP-bound form. The sequence is that of DENN domain-containing protein 1C (Dennd1c) from Mus musculus (Mouse).